The following is a 408-amino-acid chain: DNA replication and repair protein RecF (408 aa).

30-37 contacts ATP; that stretch reads GSNGQGKT. Disordered stretches follow at residues 220 to 252 and 389 to 408; these read DHGPSARPELSILADDPGEDDVADETGARDGGR and SPTPASASEPASPGEDGGAA. The span at 389 to 402 shows a compositional bias: low complexity; that stretch reads SPTPASASEPASPG.

It belongs to the RecF family.

The protein localises to the cytoplasm. Its function is as follows. The RecF protein is involved in DNA metabolism; it is required for DNA replication and normal SOS inducibility. RecF binds preferentially to single-stranded, linear DNA. It also seems to bind ATP. This Clavibacter sepedonicus (Clavibacter michiganensis subsp. sepedonicus) protein is DNA replication and repair protein RecF.